A 229-amino-acid polypeptide reads, in one-letter code: MSNQGEYPEDNRVGKHEPHDLSLTRRDLIKVSAATAATAVVYPHSTLAASVPAATPAPEIMPLTLKVNGKTEQLEVDTRTTLLDTLRENLHLIGTKKGCDHGQCGACTVLVNGRRLNACLTLAVMHQGAEITTIEGLGSPDNLHPMQAAFIKHDGFQCGYCTSGQICSSVAVLKEIQDGIPSHVTVDLVSAPETTADEIRERMSGNICRCGAYANILAAIEDAAGEIKS.

Residues 1-21 (MSNQGEYPEDNRVGKHEPHDL) are disordered. Positions 1-53 (MSNQGEYPEDNRVGKHEPHDLSLTRRDLIKVSAATAATAVVYPHSTLAASVPA) form a signal peptide, tat-type signal. Basic and acidic residues predominate over residues 9–21 (EDNRVGKHEPHDL). The 2Fe-2S ferredoxin-type domain occupies 61–137 (MPLTLKVNGK…GAEITTIEGL (77 aa)). Residues cysteine 99, cysteine 104, glycine 105, cysteine 107, cysteine 119, cysteine 158, cysteine 161, cysteine 208, and cysteine 210 each coordinate [2Fe-2S] cluster.

Heterotrimer composed of PaoA, PaoB and PaoC. [2Fe-2S] cluster is required as a cofactor. In terms of processing, exported by the Tat system. The position of the signal peptide cleavage has not been experimentally proven.

It is found in the periplasm. It carries out the reaction an aldehyde + A + H2O = a carboxylate + AH2 + H(+). With respect to regulation, the complex requires PaoD for activity. Oxidizes aldehydes to the corresponding carboxylic acids with a preference for aromatic aldehydes. It might play a role in the detoxification of aldehydes to avoid cell damage. This chain is Aldehyde oxidoreductase iron-sulfur-binding subunit PaoA, found in Escherichia coli (strain K12).